A 363-amino-acid polypeptide reads, in one-letter code: Probable L-tyrosine/L-aspartate decarboxylase (363 aa).

Residue lysine 208 is modified to N6-(pyridoxal phosphate)lysine.

Belongs to the group II decarboxylase family. MfnA subfamily. It depends on pyridoxal 5'-phosphate as a cofactor.

It catalyses the reaction L-tyrosine + H(+) = tyramine + CO2. The enzyme catalyses L-aspartate + H(+) = beta-alanine + CO2. Its pathway is cofactor biosynthesis; methanofuran biosynthesis. It functions in the pathway cofactor biosynthesis; coenzyme A biosynthesis. Functionally, catalyzes the decarboxylation of L-tyrosine to produce tyramine for methanofuran biosynthesis. Can also catalyze the decarboxylation of L-aspartate to produce beta-alanine for coenzyme A (CoA) biosynthesis. The chain is Probable L-tyrosine/L-aspartate decarboxylase from Methanothermobacter thermautotrophicus (strain ATCC 29096 / DSM 1053 / JCM 10044 / NBRC 100330 / Delta H) (Methanobacterium thermoautotrophicum).